Here is a 357-residue protein sequence, read N- to C-terminus: Nicotinate-nucleotide--dimethylbenzimidazole phosphoribosyltransferase (357 aa).

Glu-323 serves as the catalytic Proton acceptor.

This sequence belongs to the CobT family.

The catalysed reaction is 5,6-dimethylbenzimidazole + nicotinate beta-D-ribonucleotide = alpha-ribazole 5'-phosphate + nicotinate + H(+). It participates in nucleoside biosynthesis; alpha-ribazole biosynthesis; alpha-ribazole from 5,6-dimethylbenzimidazole: step 1/2. In terms of biological role, catalyzes the synthesis of alpha-ribazole-5'-phosphate from nicotinate mononucleotide (NAMN) and 5,6-dimethylbenzimidazole (DMB). This is Nicotinate-nucleotide--dimethylbenzimidazole phosphoribosyltransferase from Nitratidesulfovibrio vulgaris (strain DP4) (Desulfovibrio vulgaris).